The following is a 79-amino-acid chain: Large ribosomal subunit protein uL24 (79 aa).

The protein belongs to the universal ribosomal protein uL24 family. As to quaternary structure, part of the 50S ribosomal subunit.

In terms of biological role, one of two assembly initiator proteins, it binds directly to the 5'-end of the 23S rRNA, where it nucleates assembly of the 50S subunit. Its function is as follows. One of the proteins that surrounds the polypeptide exit tunnel on the outside of the subunit. This Lactobacillus delbrueckii subsp. bulgaricus (strain ATCC BAA-365 / Lb-18) protein is Large ribosomal subunit protein uL24.